A 382-amino-acid chain; its full sequence is Putative phospholipase A1 (382 aa).

The N-terminal stretch at Met-1 to Ala-27 is a signal peptide. Topologically, residues Phe-28 to Gln-65 are periplasmic. A beta stranded transmembrane segment spans residues Glu-66–Arg-78. The Extracellular portion of the chain corresponds to Ser-79 to Arg-168. A beta stranded membrane pass occupies residues Ala-169–Glu-183. Residues Asp-184–Arg-189 lie on the Periplasmic side of the membrane. Residues Ala-190–Trp-202 form a beta stranded membrane-spanning segment. Over Gln-203–Pro-213 the chain is Extracellular. Ca(2+) is bound at residue Ser-211. Residues Phe-214–Leu-233 form a beta stranded membrane-spanning segment. The Periplasmic portion of the chain corresponds to Pro-234–Gly-236. A beta stranded transmembrane segment spans residues Gly-237–Ser-250. His-248 serves as the catalytic Proton acceptor. Ser-250 serves as the catalytic Nucleophile. Over Asn-251–Arg-259 the chain is Extracellular. Ser-258 is a binding site for Ca(2+). Residues Ser-260–Trp-272 form a beta stranded membrane-spanning segment. At Gly-273–Lys-274 the chain is on the periplasmic side. Residues Leu-275–Arg-284 form a beta stranded membrane-spanning segment. Residues Ala-285–Asp-306 are Extracellular-facing. Residue Asp-294 participates in Ca(2+) binding. The chain crosses the membrane as a beta stranded span at residues Val-307 to Leu-313. Topologically, residues Asn-314–Asp-315 are periplasmic. Residues Arg-316–Tyr-325 traverse the membrane as a beta stranded segment. Residues Asn-326–Gly-332 lie on the Extracellular side of the membrane. Residues Ala-333–Pro-341 form a beta stranded membrane-spanning segment. The Periplasmic portion of the chain corresponds to Ile-342–Leu-346. The beta stranded transmembrane segment at Lys-347–Tyr-356 threads the bilayer. At Gly-357 to His-365 the chain is on the extracellular side. The beta stranded transmembrane segment at Lys-366–Asn-377 threads the bilayer. Topologically, residues Asp-378–Ile-382 are periplasmic.

Belongs to the phospholipase A1 family. Homodimer; dimerization is reversible, and the dimeric form is the active one. Requires Ca(2+) as cofactor.

It localises to the cell outer membrane. The catalysed reaction is a 1,2-diacyl-sn-glycero-3-phosphocholine + H2O = a 2-acyl-sn-glycero-3-phosphocholine + a fatty acid + H(+). It catalyses the reaction a 1,2-diacyl-sn-glycero-3-phosphocholine + H2O = a 1-acyl-sn-glycero-3-phosphocholine + a fatty acid + H(+). Its function is as follows. Hydrolysis of phosphatidylcholine with phospholipase A2 (EC 3.1.1.4) and phospholipase A1 (EC 3.1.1.32) activities. The protein is Putative phospholipase A1 of Neisseria meningitidis serogroup B (strain ATCC BAA-335 / MC58).